Reading from the N-terminus, the 503-residue chain is Lycopene beta cyclase, chloroplastic/chromoplastic (503 aa).

The transit peptide at 1-85 (MDTLLRTHNR…DLPLYDPSKA (85 aa)) directs the protein to the chloroplast and chromoplast. Residue 90 to 117 (LAVVGGGPLARSCSTSLGGGLSVVSIDP) coordinates NAD(+).

This sequence belongs to the lycopene cyclase family.

It localises to the plastid. Its subcellular location is the chloroplast. The protein resides in the chromoplast. It is found in the chromoplast membrane. The protein localises to the chloroplast membrane. The catalysed reaction is a carotenoid psi-end group = a carotenoid beta-end derivative. It functions in the pathway carotenoid biosynthesis; beta-carotene biosynthesis. It participates in carotenoid biosynthesis; beta-zeacarotene biosynthesis. Catalyzes the double cyclization reaction which converts lycopene to beta-carotene and neurosporene to beta-zeacarotene. The polypeptide is Lycopene beta cyclase, chloroplastic/chromoplastic (LCY1) (Narcissus pseudonarcissus (Daffodil)).